We begin with the raw amino-acid sequence, 190 residues long: Superoxide dismutase [Fe] (190 aa).

Fe cation is bound by residues His-27, His-75, Asp-156, and His-160.

The protein belongs to the iron/manganese superoxide dismutase family. In terms of assembly, homodimer. Fe cation serves as cofactor.

The catalysed reaction is 2 superoxide + 2 H(+) = H2O2 + O2. Its function is as follows. Destroys superoxide anion radicals which are normally produced within the cells and which are toxic to biological systems. In Entamoeba histolytica (strain ATCC 30459 / HM-1:IMSS / ABRM), this protein is Superoxide dismutase [Fe] (SODB).